Here is a 423-residue protein sequence, read N- to C-terminus: uncharacterized protein (423 aa).

Residues 1 to 16 (MKSRIFFITLLTIVAA) form the signal peptide. Residues 17–402 (QESADQLCSS…SSSAKEEQTS (386 aa)) lie on the Extracellular side of the membrane. Disulfide bonds link C24/C217, C33/C43, C36/C68, C46/C57, C219/C238, C230/C241, C243/C252, C254/C288, C271/C286, C280/C291, C293/C303, C305/C327, C310/C325, C319/C330, C332/C341, and C343/C350. An N-linked (GlcNAc...) asparagine glycan is attached at N65. A cysteine-rich tandem repeats region spans residues 215-350 (CGCECEKHPE…CSCSTASNNC (136 aa)). 3 I-EGF domains span residues 219-253 (CEKH…DKCE), 254-304 (CPLA…KFCQ), and 305-342 (CDND…DDCS). N-linked (GlcNAc...) asparagine glycosylation is present at N274. N307 is a glycosylation site (N-linked (GlcNAc...) asparagine). The interval 354-406 (GTPAPEEKDKPESVPEEPEATEKPDDMPSDSDLEKELDESSSAKEEQTSSSGV) is disordered. The segment covering 380 to 392 (MPSDSDLEKELDE) has biased composition (acidic residues). A helical membrane pass occupies residues 403 to 421 (SSGVVSRVCVLLTFFLLVL). Residues 422–423 (NF) are Cytoplasmic-facing.

It belongs to the integrin beta chain family.

Its subcellular location is the membrane. This is an uncharacterized protein from Caenorhabditis elegans.